Reading from the N-terminus, the 116-residue chain is Phage-like element PBSX protein XkdD (116 aa).

This Bacillus subtilis (strain 168) protein is Phage-like element PBSX protein XkdD (xkdD).